Here is a 366-residue protein sequence, read N- to C-terminus: Histidinol-phosphate aminotransferase 2 (366 aa).

A compositionally biased stretch (polar residues) spans 1-11; sequence MQVKDQLSSLQ. Positions 1–21 are disordered; that stretch reads MQVKDQLSSLQPYKPGKSPEQ. Lys-222 is subject to N6-(pyridoxal phosphate)lysine.

It belongs to the class-II pyridoxal-phosphate-dependent aminotransferase family. Histidinol-phosphate aminotransferase subfamily. In terms of assembly, homodimer. Pyridoxal 5'-phosphate is required as a cofactor.

It carries out the reaction L-histidinol phosphate + 2-oxoglutarate = 3-(imidazol-4-yl)-2-oxopropyl phosphate + L-glutamate. The protein operates within amino-acid biosynthesis; L-histidine biosynthesis; L-histidine from 5-phospho-alpha-D-ribose 1-diphosphate: step 7/9. The chain is Histidinol-phosphate aminotransferase 2 (hisC2) from Bacillus anthracis.